The sequence spans 70 residues: Protein SlyX homolog (70 aa).

It belongs to the SlyX family.

This Shewanella frigidimarina (strain NCIMB 400) protein is Protein SlyX homolog.